The primary structure comprises 285 residues: Large ribosomal subunit protein uL1m (285 aa).

Residues 1–19 (MLSVVAIPKICVTGPARRC) constitute a mitochondrion transit peptide.

The protein belongs to the universal ribosomal protein uL1 family. As to quaternary structure, component of the mitochondrial large ribosomal subunit (mt-LSU). Mature yeast 74S mitochondrial ribosomes consist of a small (37S) and a large (54S) subunit. The 37S small subunit contains a 15S ribosomal RNA (15S mt-rRNA) and 34 different proteins. The 54S large subunit contains a 21S rRNA (21S mt-rRNA) and 46 different proteins.

It is found in the mitochondrion. Its function is as follows. Component of the mitochondrial ribosome (mitoribosome), a dedicated translation machinery responsible for the synthesis of mitochondrial genome-encoded proteins, including at least some of the essential transmembrane subunits of the mitochondrial respiratory chain. The mitoribosomes are attached to the mitochondrial inner membrane and translation products are cotranslationally integrated into the membrane. This is Large ribosomal subunit protein uL1m (MRPL1) from Saccharomyces cerevisiae (strain ATCC 204508 / S288c) (Baker's yeast).